We begin with the raw amino-acid sequence, 350 residues long: Holliday junction branch migration complex subunit RuvB (350 aa).

Positions 1–22 (MDHTASLSPVRPEAQPTDDRER) are disordered. The segment at 1–185 (MDHTASLSPV…FGIVERFEFY (185 aa)) is large ATPase domain (RuvB-L). Residues Leu-24, Arg-25, Gly-66, Lys-69, Thr-70, Thr-71, 132-134 (EDY), Arg-175, Tyr-185, and Arg-222 contribute to the ATP site. Mg(2+) is bound at residue Thr-70. The small ATPAse domain (RuvB-S) stretch occupies residues 186–256 (TPEELAAIVQ…IVRAGLAHLK (71 aa)). A head domain (RuvB-H) region spans residues 259 to 350 (ELGLELHDIQ…PHSPEQGTLL (92 aa)). Residues Arg-314 and Arg-319 each contribute to the DNA site.

It belongs to the RuvB family. Homohexamer. Forms an RuvA(8)-RuvB(12)-Holliday junction (HJ) complex. HJ DNA is sandwiched between 2 RuvA tetramers; dsDNA enters through RuvA and exits via RuvB. An RuvB hexamer assembles on each DNA strand where it exits the tetramer. Each RuvB hexamer is contacted by two RuvA subunits (via domain III) on 2 adjacent RuvB subunits; this complex drives branch migration. In the full resolvosome a probable DNA-RuvA(4)-RuvB(12)-RuvC(2) complex forms which resolves the HJ.

Its subcellular location is the cytoplasm. It carries out the reaction ATP + H2O = ADP + phosphate + H(+). Functionally, the RuvA-RuvB-RuvC complex processes Holliday junction (HJ) DNA during genetic recombination and DNA repair, while the RuvA-RuvB complex plays an important role in the rescue of blocked DNA replication forks via replication fork reversal (RFR). RuvA specifically binds to HJ cruciform DNA, conferring on it an open structure. The RuvB hexamer acts as an ATP-dependent pump, pulling dsDNA into and through the RuvAB complex. RuvB forms 2 homohexamers on either side of HJ DNA bound by 1 or 2 RuvA tetramers; 4 subunits per hexamer contact DNA at a time. Coordinated motions by a converter formed by DNA-disengaged RuvB subunits stimulates ATP hydrolysis and nucleotide exchange. Immobilization of the converter enables RuvB to convert the ATP-contained energy into a lever motion, pulling 2 nucleotides of DNA out of the RuvA tetramer per ATP hydrolyzed, thus driving DNA branch migration. The RuvB motors rotate together with the DNA substrate, which together with the progressing nucleotide cycle form the mechanistic basis for DNA recombination by continuous HJ branch migration. Branch migration allows RuvC to scan DNA until it finds its consensus sequence, where it cleaves and resolves cruciform DNA. The chain is Holliday junction branch migration complex subunit RuvB from Treponema pallidum (strain Nichols).